The following is a 745-amino-acid chain: Centromere protein I (745 aa).

A compositionally biased stretch (polar residues) spans 1-27 (MATPRLTRNSQQQNRISQGSNSRQTTL). The tract at residues 1-58 (MATPRLTRNSQQQNRISQGSNSRQTTLLDWKVKDKAGNSKSVLEESSSLEDSNHADDQ) is disordered. Residues 39 to 50 (SKSVLEESSSLE) show a composition bias toward low complexity.

This sequence belongs to the CENP-I/CTF3 family. As to quaternary structure, component of the CENPA-CAD complex, composed of CENPI, CENPK, CENPL, CENPO, CENPP, CENPQ, CENPR and CENPS. The CENPA-CAD complex interacts with the CENPA-NAC complex, at least composed of CENPA, CENPC, CENPH, CENPM, CENPN, CENPT and CENPU. Interacts with SENP6. Sumoylated. Sumoylated form can be polyubiquitinated by RNF4, leading to its degradation. Desumoylation by SENP6 prevents its degradation. In terms of tissue distribution, highly expressed in testis, ovary and spleen. A much lower mRNA level is found in brain and lung, and no expression is detected in liver, kidney, heart, muscle, pituitary gland, prostate, epididymis and seminal vesicle.

The protein localises to the nucleus. It is found in the chromosome. The protein resides in the centromere. Functionally, component of the CENPA-CAD (nucleosome distal) complex, a complex recruited to centromeres which is involved in assembly of kinetochore proteins, mitotic progression and chromosome segregation. May be involved in incorporation of newly synthesized CENPA into centromeres via its interaction with the CENPA-NAC complex. Required for the localization of CENPF, MAD1L1 and MAD2 (MAD2L1 or MAD2L2) to kinetochores. Involved in the response of gonadal tissues to follicle-stimulating hormone. The protein is Centromere protein I (Cenpi) of Rattus norvegicus (Rat).